Consider the following 134-residue polypeptide: Small ribosomal subunit protein uS8c (134 aa).

Belongs to the universal ribosomal protein uS8 family. As to quaternary structure, part of the 30S ribosomal subunit.

It is found in the plastid. It localises to the chloroplast. One of the primary rRNA binding proteins, it binds directly to 16S rRNA central domain where it helps coordinate assembly of the platform of the 30S subunit. This chain is Small ribosomal subunit protein uS8c (rps8), found in Lactuca sativa (Garden lettuce).